Reading from the N-terminus, the 820-residue chain is Leucine--tRNA ligase (820 aa).

The 'HIGH' region motif lies at 40–51 (PYPSGAGLHVGH). The 'KMSKS' region signature appears at 601 to 605 (KMSKS). Residue lysine 604 coordinates ATP.

The protein belongs to the class-I aminoacyl-tRNA synthetase family.

It is found in the cytoplasm. It catalyses the reaction tRNA(Leu) + L-leucine + ATP = L-leucyl-tRNA(Leu) + AMP + diphosphate. This Chlamydia caviae (strain ATCC VR-813 / DSM 19441 / 03DC25 / GPIC) (Chlamydophila caviae) protein is Leucine--tRNA ligase.